A 144-amino-acid chain; its full sequence is Peptide methionine sulfoxide reductase MsrB (144 aa).

Positions 1-12 (MDKQQGELRQRL) are enriched in basic and acidic residues. The disordered stretch occupies residues 1–25 (MDKQQGELRQRLTPEQYAVTQEAAT). The MsrB domain maps to 5 to 128 (QGELRQRLTP…NSAALKFIPV (124 aa)). Catalysis depends on Cys117, which acts as the Nucleophile.

This sequence belongs to the MsrB Met sulfoxide reductase family.

The enzyme catalyses L-methionyl-[protein] + [thioredoxin]-disulfide + H2O = L-methionyl-(R)-S-oxide-[protein] + [thioredoxin]-dithiol. The polypeptide is Peptide methionine sulfoxide reductase MsrB (Lactiplantibacillus plantarum (strain ATCC BAA-793 / NCIMB 8826 / WCFS1) (Lactobacillus plantarum)).